Reading from the N-terminus, the 297-residue chain is tRNA uridine(34) hydroxylase (297 aa).

Residues 133 to 228 (RGEEVVFFDG…YGETFKDQGL (96 aa)) form the Rhodanese domain. C188 (cysteine persulfide intermediate) is an active-site residue.

This sequence belongs to the TrhO family.

It carries out the reaction uridine(34) in tRNA + AH2 + O2 = 5-hydroxyuridine(34) in tRNA + A + H2O. In terms of biological role, catalyzes oxygen-dependent 5-hydroxyuridine (ho5U) modification at position 34 in tRNAs. In Arthrobacter sp. (strain FB24), this protein is tRNA uridine(34) hydroxylase.